A 184-amino-acid chain; its full sequence is GMP synthase [glutamine-hydrolyzing] subunit A (184 aa).

The 182-residue stretch at 3-184 (HIAVIDNHGQ…VFKNFIARCQ (182 aa)) folds into the Glutamine amidotransferase type-1 domain. Cys-75 (nucleophile) is an active-site residue. Catalysis depends on residues His-163 and Glu-165.

Heterodimer composed of a glutamine amidotransferase subunit (A) and a GMP-binding subunit (B).

The catalysed reaction is XMP + L-glutamine + ATP + H2O = GMP + L-glutamate + AMP + diphosphate + 2 H(+). It participates in purine metabolism; GMP biosynthesis; GMP from XMP (L-Gln route): step 1/1. Functionally, catalyzes the synthesis of GMP from XMP. The chain is GMP synthase [glutamine-hydrolyzing] subunit A from Haloquadratum walsbyi (strain DSM 16790 / HBSQ001).